We begin with the raw amino-acid sequence, 288 residues long: Putative transcription factor kapC (288 aa).

Positions Met-1 to His-10 are enriched in pro residues. The tract at residues Met-1–Lys-121 is disordered. Over residues His-26–Gln-41 the composition is skewed to low complexity. Residues Ala-42–Met-54 show a composition bias toward pro residues. The span at Gln-84–Pro-93 shows a compositional bias: polar residues. Positions Pro-100–Leu-163 constitute a bZIP domain. The segment at Leu-101 to His-124 is basic motif. Low complexity predominate over residues Arg-106–Ala-116. The leucine-zipper stretch occupies residues Leu-128–Leu-159. 2 disordered regions span residues Glu-172–Met-226 and Pro-242–Ser-288. The span at Pro-202–Pro-212 shows a compositional bias: pro residues. Residues Gln-213–Pro-222 show a composition bias toward low complexity.

This sequence belongs to the bZIP family.

Its subcellular location is the nucleus. Functionally, putative transcription factor. This Aspergillus clavatus (strain ATCC 1007 / CBS 513.65 / DSM 816 / NCTC 3887 / NRRL 1 / QM 1276 / 107) protein is Putative transcription factor kapC (kapC).